Here is a 142-residue protein sequence, read N- to C-terminus: Large ribosomal subunit protein uL13 (142 aa).

The protein belongs to the universal ribosomal protein uL13 family. In terms of assembly, part of the 50S ribosomal subunit.

This protein is one of the early assembly proteins of the 50S ribosomal subunit, although it is not seen to bind rRNA by itself. It is important during the early stages of 50S assembly. This is Large ribosomal subunit protein uL13 from Coxiella burnetii (strain CbuG_Q212) (Coxiella burnetii (strain Q212)).